A 466-amino-acid polypeptide reads, in one-letter code: ATP synthase subunit beta (466 aa).

153 to 160 (GGAGVGKT) contacts ATP.

It belongs to the ATPase alpha/beta chains family. In terms of assembly, F-type ATPases have 2 components, CF(1) - the catalytic core - and CF(0) - the membrane proton channel. CF(1) has five subunits: alpha(3), beta(3), gamma(1), delta(1), epsilon(1). CF(0) has three main subunits: a(1), b(2) and c(9-12). The alpha and beta chains form an alternating ring which encloses part of the gamma chain. CF(1) is attached to CF(0) by a central stalk formed by the gamma and epsilon chains, while a peripheral stalk is formed by the delta and b chains.

The protein resides in the cell membrane. It catalyses the reaction ATP + H2O + 4 H(+)(in) = ADP + phosphate + 5 H(+)(out). In terms of biological role, produces ATP from ADP in the presence of a proton gradient across the membrane. The catalytic sites are hosted primarily by the beta subunits. The protein is ATP synthase subunit beta of Oenococcus oeni (strain ATCC BAA-331 / PSU-1).